The following is a 338-amino-acid chain: Elongation factor Ts, mitochondrial (338 aa).

A mitochondrion-targeting transit peptide spans 1-42; that stretch reads MSPSIAMFTLTPNARALASKTSKMDLIKNLRERTGAPIVDVK.

This sequence belongs to the EF-Ts family.

Its subcellular location is the mitochondrion. Functionally, associates with the EF-Tu.GDP complex and induces the exchange of GDP to GTP. It remains bound to the aminoacyl-tRNA.EF-Tu.GTP complex up to the GTP hydrolysis stage on the ribosome. The sequence is that of Elongation factor Ts, mitochondrial from Ostreococcus tauri.